We begin with the raw amino-acid sequence, 55 residues long: ATTGCSCPQCIIFDPICASSYKNGRRGFSSGCHMRCYNRCHGTDYFQISKGSKCI.

Cystine bridges form between C5-C40, C7-C36, C10-C32, and C17-C54.

Monomer. As to expression, stored in hemocyte granules and secreted into the hemolymph.

It localises to the secreted. Its function is as follows. Has antibacterial activity against Gram-positive bacterium M.luteus. This is Locustin from Locusta migratoria (Migratory locust).